Consider the following 227-residue polypeptide: Ribose-5-phosphate isomerase A (227 aa).

Substrate-binding positions include 28–31, 84–87, and 97–100; these read TGST, DGAD, and KGGG. Residue Glu106 is the Proton acceptor of the active site. Lys124 is a binding site for substrate.

It belongs to the ribose 5-phosphate isomerase family. As to quaternary structure, homodimer.

It catalyses the reaction aldehydo-D-ribose 5-phosphate = D-ribulose 5-phosphate. Its pathway is carbohydrate degradation; pentose phosphate pathway; D-ribose 5-phosphate from D-ribulose 5-phosphate (non-oxidative stage): step 1/1. Catalyzes the reversible conversion of ribose-5-phosphate to ribulose 5-phosphate. The polypeptide is Ribose-5-phosphate isomerase A (Lactiplantibacillus plantarum (strain ATCC BAA-793 / NCIMB 8826 / WCFS1) (Lactobacillus plantarum)).